Consider the following 905-residue polypeptide: Probable aromatic-L-amino-acid decarboxylase (905 aa).

Positions 250 to 296 are disordered; sequence YLNPIIKTPPHNERVPKMKTNISKTRKKKGKVSDASKDSRPSETKKE. Positions 280–296 are enriched in basic and acidic residues; sequence KVSDASKDSRPSETKKE. Thr-492 and Ser-591 together coordinate pyridoxal 5'-phosphate. Lys-648 is subject to N6-(pyridoxal phosphate)lysine. Residues 861 to 905 form a disordered region; it reads HTAEYADPPGKSNKSPQVAAKGELPSAAPPSSRTPNSDISEKSDR. Over residues 889 to 898 the composition is skewed to polar residues; the sequence is PPSSRTPNSD.

This sequence belongs to the group II decarboxylase family. Homodimer. Requires pyridoxal 5'-phosphate as cofactor.

It catalyses the reaction L-dopa + H(+) = dopamine + CO2. The enzyme catalyses 5-hydroxy-L-tryptophan + H(+) = serotonin + CO2. It functions in the pathway catecholamine biosynthesis; dopamine biosynthesis; dopamine from L-tyrosine: step 2/2. In terms of biological role, catalyzes the decarboxylation of L-3,4-dihydroxyphenylalanine (DOPA) to dopamine, L-5-hydroxytryptophan to serotonin and L-tryptophan to tryptamine. In Caenorhabditis elegans, this protein is Probable aromatic-L-amino-acid decarboxylase (hdl-1).